A 269-amino-acid polypeptide reads, in one-letter code: Chymotrypsin-like elastase family member 2B (269 aa).

An N-terminal signal peptide occupies residues 1 to 16 (MIRTLLLSTLVAGALS). The propeptide at 17–28 (CGVSTYAPDMSR) is activation peptide. In terms of domain architecture, Peptidase S1 spans 29–267 (MLGGEEARPN…YNDWINSVIA (239 aa)). C58 and C74 form a disulfide bridge. Active-site charge relay system residues include H73 and D121. 3 disulfide bridges follow: C155–C222, C186–C202, and C212–C243. The active-site Charge relay system is the S216.

It belongs to the peptidase S1 family. Elastase subfamily. As to expression, pancreas.

Its subcellular location is the secreted. The catalysed reaction is Preferential cleavage: Leu-|-Xaa, Met-|-Xaa and Phe-|-Xaa. Hydrolyzes elastin.. In terms of biological role, acts upon elastin. The protein is Chymotrypsin-like elastase family member 2B (CELA2B) of Homo sapiens (Human).